Reading from the N-terminus, the 180-residue chain is Large ribosomal subunit protein uL6 (180 aa).

This sequence belongs to the universal ribosomal protein uL6 family. In terms of assembly, part of the 50S ribosomal subunit.

Functionally, this protein binds to the 23S rRNA, and is important in its secondary structure. It is located near the subunit interface in the base of the L7/L12 stalk, and near the tRNA binding site of the peptidyltransferase center. The protein is Large ribosomal subunit protein uL6 of Desulforapulum autotrophicum (strain ATCC 43914 / DSM 3382 / VKM B-1955 / HRM2) (Desulfobacterium autotrophicum).